The primary structure comprises 95 residues: MSSPVRTPPPERLEPNPGMSYAVMEIAIIAAVITAVALVLVCLLFLMLRYLYRHKGTYYTNEAKGTEFAESADAALQSDPALQDAGDTSKKEYFI.

The Extracellular segment spans residues 1-25 (MSSPVRTPPPERLEPNPGMSYAVME). The helical; Signal-anchor for type III membrane protein transmembrane segment at 26 to 46 (IAIIAAVITAVALVLVCLLFL) threads the bilayer. At 47–95 (MLRYLYRHKGTYYTNEAKGTEFAESADAALQSDPALQDAGDTSKKEYFI) the chain is on the cytoplasmic side. Phosphoserine occurs at positions 71, 78, and 89.

This sequence belongs to the glycophorin-C family.

The protein resides in the cell membrane. This is Glycophorin-C (Gypc) from Rattus norvegicus (Rat).